Reading from the N-terminus, the 114-residue chain is Fluoride-specific ion channel FluC 1 (114 aa).

A run of 3 helical transmembrane segments spans residues 23–43, 52–72, and 84–104; these read ATLT…SYVF, LSTA…TLSV, and FLAM…SHLG. Gly62 and Thr65 together coordinate Na(+).

This sequence belongs to the fluoride channel Fluc/FEX (TC 1.A.43) family.

Its subcellular location is the cell membrane. The catalysed reaction is fluoride(in) = fluoride(out). Na(+) is not transported, but it plays an essential structural role and its presence is essential for fluoride channel function. Fluoride-specific ion channel. Important for reducing fluoride concentration in the cell, thus reducing its toxicity. This is Fluoride-specific ion channel FluC 1 from Desulfitobacterium hafniense (strain Y51).